Here is a 294-residue protein sequence, read N- to C-terminus: Bifunctional protein FolD (294 aa).

Residues 166–168 (GRS), S191, and I232 each bind NADP(+).

This sequence belongs to the tetrahydrofolate dehydrogenase/cyclohydrolase family. As to quaternary structure, homodimer.

It carries out the reaction (6R)-5,10-methylene-5,6,7,8-tetrahydrofolate + NADP(+) = (6R)-5,10-methenyltetrahydrofolate + NADPH. The catalysed reaction is (6R)-5,10-methenyltetrahydrofolate + H2O = (6R)-10-formyltetrahydrofolate + H(+). The protein operates within one-carbon metabolism; tetrahydrofolate interconversion. Catalyzes the oxidation of 5,10-methylenetetrahydrofolate to 5,10-methenyltetrahydrofolate and then the hydrolysis of 5,10-methenyltetrahydrofolate to 10-formyltetrahydrofolate. The chain is Bifunctional protein FolD from Bradyrhizobium diazoefficiens (strain JCM 10833 / BCRC 13528 / IAM 13628 / NBRC 14792 / USDA 110).